A 283-amino-acid polypeptide reads, in one-letter code: MIDKKILQMHFSRNAKNYDAYAKVQKKMANTLLDMLDLDSKSRLDILDVGCGTGYLTKLLLDRWPDARITAIDIAPGMIEYARDRFNESNVEFACLDIEEAELNQKYDLVISNATFQWFNDLGGTVNKLVQSLKSDGVLAFSTFGHMTFSELHFSYETARRKLKIDEEFPPGQKFCNAKEILKICCETFEGLEGFEFDTVKKESLEYEYFYTVREFLDSVKKIGANNSNKQRKVNTALTKEMIRIYEEMFKVNGLVRATYHCIFITSRKKLAANTRRLVNAVV.

Belongs to the methyltransferase superfamily.

It carries out the reaction malonyl-[ACP] + S-adenosyl-L-methionine = malonyl-[ACP] methyl ester + S-adenosyl-L-homocysteine. It participates in cofactor biosynthesis; biotin biosynthesis. Its function is as follows. Converts the free carboxyl group of a malonyl-thioester to its methyl ester by transfer of a methyl group from S-adenosyl-L-methionine (SAM). It allows to synthesize pimeloyl-ACP via the fatty acid synthetic pathway. This is Malonyl-[acyl-carrier protein] O-methyltransferase from Acetivibrio thermocellus (strain ATCC 27405 / DSM 1237 / JCM 9322 / NBRC 103400 / NCIMB 10682 / NRRL B-4536 / VPI 7372) (Clostridium thermocellum).